Reading from the N-terminus, the 461-residue chain is Bifunctional protein GlmU (461 aa).

The tract at residues 1–227 (MEVIALILAA…PDEVLGVNDR (227 aa)) is pyrophosphorylase. Residues 8 to 11 (LAAG), Lys-22, Gln-73, 78 to 79 (GT), 100 to 102 (YGD), Gly-137, Glu-152, Asn-167, and Asn-225 contribute to the UDP-N-acetyl-alpha-D-glucosamine site. Asp-102 contributes to the Mg(2+) binding site. Asn-225 lines the Mg(2+) pocket. Positions 228 to 248 (RQLAELERIYQVHQARALMER) are linker. Residues 249–461 (GVTLRDPARF…EKARKESCAE (213 aa)) are N-acetyltransferase. Arg-332 and Lys-350 together coordinate UDP-N-acetyl-alpha-D-glucosamine. The Proton acceptor role is filled by His-362. 2 residues coordinate UDP-N-acetyl-alpha-D-glucosamine: Tyr-365 and Asn-376. Acetyl-CoA-binding positions include Ala-379, 385–386 (NY), Ser-404, Ala-422, and Arg-439.

It in the N-terminal section; belongs to the N-acetylglucosamine-1-phosphate uridyltransferase family. This sequence in the C-terminal section; belongs to the transferase hexapeptide repeat family. Homotrimer. Requires Mg(2+) as cofactor.

The protein resides in the cytoplasm. It catalyses the reaction alpha-D-glucosamine 1-phosphate + acetyl-CoA = N-acetyl-alpha-D-glucosamine 1-phosphate + CoA + H(+). It carries out the reaction N-acetyl-alpha-D-glucosamine 1-phosphate + UTP + H(+) = UDP-N-acetyl-alpha-D-glucosamine + diphosphate. It functions in the pathway nucleotide-sugar biosynthesis; UDP-N-acetyl-alpha-D-glucosamine biosynthesis; N-acetyl-alpha-D-glucosamine 1-phosphate from alpha-D-glucosamine 6-phosphate (route II): step 2/2. The protein operates within nucleotide-sugar biosynthesis; UDP-N-acetyl-alpha-D-glucosamine biosynthesis; UDP-N-acetyl-alpha-D-glucosamine from N-acetyl-alpha-D-glucosamine 1-phosphate: step 1/1. Its pathway is bacterial outer membrane biogenesis; LPS lipid A biosynthesis. Catalyzes the last two sequential reactions in the de novo biosynthetic pathway for UDP-N-acetylglucosamine (UDP-GlcNAc). The C-terminal domain catalyzes the transfer of acetyl group from acetyl coenzyme A to glucosamine-1-phosphate (GlcN-1-P) to produce N-acetylglucosamine-1-phosphate (GlcNAc-1-P), which is converted into UDP-GlcNAc by the transfer of uridine 5-monophosphate (from uridine 5-triphosphate), a reaction catalyzed by the N-terminal domain. The sequence is that of Bifunctional protein GlmU from Methylococcus capsulatus (strain ATCC 33009 / NCIMB 11132 / Bath).